A 142-amino-acid chain; its full sequence is Hemoglobin subunit alpha-5 (142 aa).

Positions threonine 2 to arginine 142 constitute a Globin domain. Histidine 59 lines the O2 pocket. Histidine 88 contacts heme b.

The protein belongs to the globin family. In terms of assembly, heterotetramer of two alpha chains and two beta chains. As to expression, red blood cells.

This is a larval (tadpole) alpha-globin. This Xenopus laevis (African clawed frog) protein is Hemoglobin subunit alpha-5 (hba5).